Here is a 98-residue protein sequence, read N- to C-terminus: NADH-ubiquinone oxidoreductase chain 4L (98 aa).

3 helical membrane passes run 1-21 (MAPINLNLILAFSLALLGVLI), 28-48 (STLLCLEGMMLSLFILMTLLI), and 59-79 (APLILLVFSACEAGVGLALLV).

This sequence belongs to the complex I subunit 4L family. In terms of assembly, core subunit of respiratory chain NADH dehydrogenase (Complex I) which is composed of 45 different subunits.

It is found in the mitochondrion inner membrane. It carries out the reaction a ubiquinone + NADH + 5 H(+)(in) = a ubiquinol + NAD(+) + 4 H(+)(out). Functionally, core subunit of the mitochondrial membrane respiratory chain NADH dehydrogenase (Complex I) which catalyzes electron transfer from NADH through the respiratory chain, using ubiquinone as an electron acceptor. Part of the enzyme membrane arm which is embedded in the lipid bilayer and involved in proton translocation. This Perameles gunnii (Eastern barred bandicoot) protein is NADH-ubiquinone oxidoreductase chain 4L (MT-ND4L).